Reading from the N-terminus, the 455-residue chain is MTTTKIKTQWACSECGSYSPKWLGQCPGCFQWNTLVEEIHSSKLKTSSYPLSSTTPVPLNTVKFQEEIRISTRSKGWNRLLGGGTVCGSLTLLGGEPGIGKSTLLLQISSQFAEQGYKVLYVCGEESVSQTSLRAQRLQISSSNIFLFPETNLEDIKQQISDLAPDILIIDSIQIIFSPSLSSAPGSVAQVRETTAELMHIAKQKQITTFIIGHVTKSGEIAGPRILEHLVDTVLYFEGNAHTNYRMIRSVKNRFGPTNELLILSMQTDGLHEVENPSGFFLQEKVVETTGSTIIPIVEGSETLLVEVQALVSSSPFSNPVRKTSGFDPNRFSLLLAVLEKRANVKLYTSDVFLSIAGGLKITQPSADLGAVLSVVSSLYNRYLPKNYTYTGEIGLGGEIRHVTHIEHRIKESIIMGFKGIVMPSGQIKGLPKEYLDQIDIIGVKTIKDAVRLLQ.

The segment at 12 to 29 (CSECGSYSPKWLGQCPGC) adopts a C4-type zinc-finger fold. 95–102 (GEPGIGKS) contributes to the ATP binding site. The RadA KNRFG motif motif lies at 252–256 (KNRFG). A lon-protease-like region spans residues 351 to 455 (DVFLSIAGGL…TIKDAVRLLQ (105 aa)).

It belongs to the RecA family. RadA subfamily.

In terms of biological role, DNA-dependent ATPase involved in processing of recombination intermediates, plays a role in repairing DNA breaks. Stimulates the branch migration of RecA-mediated strand transfer reactions, allowing the 3' invading strand to extend heteroduplex DNA faster. Binds ssDNA in the presence of ADP but not other nucleotides, has ATPase activity that is stimulated by ssDNA and various branched DNA structures, but inhibited by SSB. Does not have RecA's homology-searching function. The chain is DNA repair protein RadA from Chlamydia muridarum (strain MoPn / Nigg).